A 211-amino-acid polypeptide reads, in one-letter code: uncharacterized protein (211 aa).

Low complexity-rich tracts occupy residues 1 to 19 (MQDP…SSSD) and 61 to 74 (SPSV…SSNA). Disordered stretches follow at residues 1–27 (MQDP…STGS) and 54–94 (ASSR…EPHR).

In terms of assembly, interacts with RLK902. In terms of tissue distribution, expressed in inflorescences, stems, rosette leaves and weakly in roots.

This is an uncharacterized protein from Arabidopsis thaliana (Mouse-ear cress).